The primary structure comprises 410 residues: LL-diaminopimelate aminotransferase (410 aa).

Substrate is bound by residues Y15 and G42. Residues Y72, 108-109 (SK), Y132, N187, Y218, and 246-248 (SFS) contribute to the pyridoxal 5'-phosphate site. The substrate site is built by K109, Y132, and N187. N6-(pyridoxal phosphate)lysine is present on K249. The pyridoxal 5'-phosphate site is built by R257 and N292. The substrate site is built by N292 and R388.

It belongs to the class-I pyridoxal-phosphate-dependent aminotransferase family. LL-diaminopimelate aminotransferase subfamily. In terms of assembly, homodimer. The cofactor is pyridoxal 5'-phosphate.

The enzyme catalyses (2S,6S)-2,6-diaminopimelate + 2-oxoglutarate = (S)-2,3,4,5-tetrahydrodipicolinate + L-glutamate + H2O + H(+). It functions in the pathway amino-acid biosynthesis; L-lysine biosynthesis via DAP pathway; LL-2,6-diaminopimelate from (S)-tetrahydrodipicolinate (aminotransferase route): step 1/1. Functionally, involved in the synthesis of meso-diaminopimelate (m-DAP or DL-DAP), required for both lysine and peptidoglycan biosynthesis. Catalyzes the direct conversion of tetrahydrodipicolinate to LL-diaminopimelate. This is LL-diaminopimelate aminotransferase from Geotalea daltonii (strain DSM 22248 / JCM 15807 / FRC-32) (Geobacter daltonii).